An 86-amino-acid chain; its full sequence is U15-lycotoxin-Ls1d (86 aa).

A signal peptide spans Met-1–Ser-20. The WAP domain occupies Asp-21–Thr-66. Intrachain disulfides connect Cys-24/Cys-54, Cys-32/Cys-58, Cys-41/Cys-53, Cys-42/Cys-80, and Cys-47/Cys-62.

The protein belongs to the venom protein 11 family. 01 (wap-1) subfamily. In terms of processing, contains 5 disulfide bonds. Expressed by the venom gland.

Its subcellular location is the secreted. In terms of biological role, has antibacterial activity. This Lycosa singoriensis (Wolf spider) protein is U15-lycotoxin-Ls1d.